The sequence spans 151 residues: Putative membrane protein ORF10 (151 aa).

2 helical membrane passes run 7–23 and 107–123; these read LCLA…GVVV and GLVA…IIMY.

Its subcellular location is the membrane. In Ictalurid herpesvirus 1 (strain Auburn) (IcHV-1), this protein is Putative membrane protein ORF10 (ORF10).